A 680-amino-acid polypeptide reads, in one-letter code: Trehalase (680 aa).

Residues 1–27 (MVLHAQPPDQSTETAREAKALAGATDG) form a disordered region.

It belongs to the glycosyl hydrolase 15 family. As to quaternary structure, homomultimer. Phosphate serves as cofactor.

The enzyme catalyses alpha,alpha-trehalose + H2O = alpha-D-glucose + beta-D-glucose. Its pathway is glycan degradation; trehalose degradation; D-glucose from alpha,alpha-trehalose: step 1/1. In terms of biological role, catalyzes the hydrolysis of alpha,alpha-trehalose into two molecules of D-glucose. This chain is Trehalase, found in Mycobacterium tuberculosis (strain ATCC 25618 / H37Rv).